Reading from the N-terminus, the 274-residue chain is Type II restriction enzyme XamI (274 aa).

It catalyses the reaction Endonucleolytic cleavage of DNA to give specific double-stranded fragments with terminal 5'-phosphates.. Its function is as follows. A P subtype restriction enzyme that recognizes the double-stranded sequence 5'-GTCGAC-3' and cleaves after G-1. In Xanthomonas campestris pv. amaranthicola, this protein is Type II restriction enzyme XamI (xamIR).